The primary structure comprises 156 residues: Ribonuclease pancreatic (156 aa).

A signal peptide spans 1–28; it reads MALEKSLALLPLLVLVLLVLGWVQPSLG. Residues 33–43 are compositionally biased toward basic and acidic residues; it reads AKKFQRQHMDS. Residues 33–52 form a disordered region; that stretch reads AKKFQRQHMDSDGSPSSNPT. The substrate site is built by lysine 35 and arginine 38. Histidine 40 acts as the Proton acceptor in catalysis. Cystine bridges form between cysteine 54–cysteine 112, cysteine 68–cysteine 123, cysteine 86–cysteine 138, and cysteine 93–cysteine 100. Asparagine 62 carries an N-linked (GlcNAc...) asparagine glycan. Substrate is bound by residues 69–73, lysine 94, and arginine 113; that span reads KPVNT. Asparagine 116 carries an N-linked (GlcNAc...) asparagine glycan. Histidine 147 acts as the Proton donor in catalysis.

The protein belongs to the pancreatic ribonuclease family. In terms of assembly, monomer. Interacts with and forms tight 1:1 complexes with RNH1. Dimerization of two such complexes may occur. Interaction with RNH1 inhibits this protein.

The protein localises to the secreted. It catalyses the reaction an [RNA] containing cytidine + H2O = an [RNA]-3'-cytidine-3'-phosphate + a 5'-hydroxy-ribonucleotide-3'-[RNA].. The catalysed reaction is an [RNA] containing uridine + H2O = an [RNA]-3'-uridine-3'-phosphate + a 5'-hydroxy-ribonucleotide-3'-[RNA].. Its function is as follows. Endonuclease that catalyzes the cleavage of RNA on the 3' side of pyrimidine nucleotides. Acts on single-stranded and double-stranded RNA. This chain is Ribonuclease pancreatic (RNASE1), found in Saimiri sciureus (Common squirrel monkey).